A 76-amino-acid polypeptide reads, in one-letter code: ATP synthase subunit c (76 aa).

A run of 2 helical transmembrane segments spans residues 13 to 33 and 55 to 75; these read LSVI…GILF and FIGL…ALII.

This sequence belongs to the ATPase C chain family. As to quaternary structure, F-type ATPases have 2 components, F(1) - the catalytic core - and F(0) - the membrane proton channel. F(1) has five subunits: alpha(3), beta(3), gamma(1), delta(1), epsilon(1). F(0) has three main subunits: a(1), b(2) and c(10-14). The alpha and beta chains form an alternating ring which encloses part of the gamma chain. F(1) is attached to F(0) by a central stalk formed by the gamma and epsilon chains, while a peripheral stalk is formed by the delta and b chains.

Its subcellular location is the cell membrane. F(1)F(0) ATP synthase produces ATP from ADP in the presence of a proton or sodium gradient. F-type ATPases consist of two structural domains, F(1) containing the extramembraneous catalytic core and F(0) containing the membrane proton channel, linked together by a central stalk and a peripheral stalk. During catalysis, ATP synthesis in the catalytic domain of F(1) is coupled via a rotary mechanism of the central stalk subunits to proton translocation. Its function is as follows. Key component of the F(0) channel; it plays a direct role in translocation across the membrane. A homomeric c-ring of between 10-14 subunits forms the central stalk rotor element with the F(1) delta and epsilon subunits. This is ATP synthase subunit c from Bifidobacterium longum subsp. infantis (strain ATCC 15697 / DSM 20088 / JCM 1222 / NCTC 11817 / S12).